The sequence spans 230 residues: Ureidoacrylate amidohydrolase RutB (230 aa).

Residue D24 is the Proton acceptor of the active site. K133 is an active-site residue. C166 functions as the Nucleophile in the catalytic mechanism.

The protein belongs to the isochorismatase family. RutB subfamily.

The catalysed reaction is (Z)-3-ureidoacrylate + H2O + H(+) = (Z)-3-aminoacrylate + NH4(+) + CO2. It carries out the reaction (Z)-3-ureidoacrylate + H2O = (Z)-3-aminoacrylate + carbamate + H(+). The enzyme catalyses (Z)-2-methylureidoacrylate + H2O + H(+) = (Z)-2-methylaminoacrylate + NH4(+) + CO2. Its function is as follows. Hydrolyzes ureidoacrylate to form aminoacrylate and carbamate. The carbamate hydrolyzes spontaneously, thereby releasing one of the nitrogen atoms of the pyrimidine ring as ammonia and one of its carbon atoms as CO2. The sequence is that of Ureidoacrylate amidohydrolase RutB from Escherichia coli O150:H5 (strain SE15).